The following is a 767-amino-acid chain: Glucoamylase S1 (767 aa).

The N-terminal stretch at 1-21 (MQRPFLLAYLVLSLLFNSALG) is a signal peptide. Disordered regions lie at residues 29–83 (RGSS…ETTI) and 125–149 (TTTV…PTTP). A compositionally biased stretch (low complexity) spans 30 to 48 (GSSSSNITSSGPSSTPFSS). An N-linked (GlcNAc...) asparagine glycan is attached at Asn-35. Polar residues predominate over residues 49–66 (ATESFSTGTTVTPSSSKY). Low complexity-rich tracts occupy residues 71–83 (TETS…ETTI) and 131–149 (STSP…PTTP). Residues Asn-308, Asn-322, Asn-414, Asn-423, and Asn-434 are each glycosylated (N-linked (GlcNAc...) asparagine). The tract at residues 348-691 (VSIERIFENI…ASTTLYQLIY (344 aa)) is h subunit. Residue Trp-455 coordinates substrate. Asn-513 carries an N-linked (GlcNAc...) asparagine glycan. The Proton acceptor role is filled by Asp-518. Glu-521 acts as the Proton donor in catalysis. N-linked (GlcNAc...) asparagine glycosylation is found at Asn-546, Asn-645, Asn-650, Asn-720, and Asn-741. A y subunit region spans residues 692–767 (RHISEQHDLV…LKATWEQTGN (76 aa)).

This sequence belongs to the glycosyl hydrolase 15 family.

It carries out the reaction Hydrolysis of terminal (1-&gt;4)-linked alpha-D-glucose residues successively from non-reducing ends of the chains with release of beta-D-glucose.. The chain is Glucoamylase S1 (STA1) from Saccharomyces cerevisiae (Baker's yeast).